A 129-amino-acid polypeptide reads, in one-letter code: Small ribosomal subunit protein uS11 (129 aa).

It belongs to the universal ribosomal protein uS11 family. In terms of assembly, part of the 30S ribosomal subunit. Interacts with proteins S7 and S18. Binds to IF-3.

Its function is as follows. Located on the platform of the 30S subunit, it bridges several disparate RNA helices of the 16S rRNA. Forms part of the Shine-Dalgarno cleft in the 70S ribosome. In Lactobacillus gasseri (strain ATCC 33323 / DSM 20243 / BCRC 14619 / CIP 102991 / JCM 1131 / KCTC 3163 / NCIMB 11718 / NCTC 13722 / AM63), this protein is Small ribosomal subunit protein uS11.